The following is a 1424-amino-acid chain: ABC multidrug transporter H (1424 aa).

Residues 1-49 (MEDQGHLPSEPRALFDRRDDTDSTNTALDETDLSRTPLQDTSHTPHAED) form a disordered region. Residues 23–42 (STNTALDETDLSRTPLQDTS) are compositionally biased toward polar residues. N-linked (GlcNAc...) asparagine glycans are attached at residues N79 and N275. Residues 96 to 351 (LSQFNIPQHI…MEEQGFVCRE (256 aa)) enclose the ABC transporter 1 domain. 7 helical membrane-spanning segments follow: residues 488 to 508 (GLFI…LLAM), 520 to 540 (VLIK…IAQI), 544 to 564 (IPVL…MVGL), 569 to 589 (GAFF…TALF), 605 to 625 (VSGF…PYHA), 629 to 649 (WFIW…LLSI), and 710 to 730 (NFGI…IATS). The interval 760-782 (EEAQLNEKAGHKGTGTDSEAQSN) is disordered. N-linked (GlcNAc...) asparagine glycans are attached at residues N790 and N798. The ABC transporter 2 domain occupies 794–1037 (FTWKNLTYTV…VKDYFARYGA (244 aa)). Residue 830–837 (GSSGAGKT) participates in ATP binding. Helical transmembrane passes span 1131-1151 (IALH…IGDS), 1161-1181 (TIFN…PLFI), 1200-1220 (VAFV…CAVL), and 1240-1260 (AIFF…QFIA). An N-linked (GlcNAc...) asparagine glycan is attached at N1265. The next 2 membrane-spanning stretches (helical) occupy residues 1268–1288 (FAAL…GVLV) and 1300–1320 (WIYW…FSVF). Residue N1338 is glycosylated (N-linked (GlcNAc...) asparagine). Residues 1395-1415 (TAIVCIFVLSSYALVYALMKL) traverse the membrane as a helical segment.

It belongs to the ABC transporter superfamily. ABCG family. PDR (TC 3.A.1.205) subfamily.

The protein resides in the cell membrane. Its activity is regulated as follows. The efflux inhibitor FK506 impairs the transport activity. In terms of biological role, ABC efflux transporter that is able to transport rhodamine 6G (R-6G), a known substrate for many ABC transporters, but seems not to transport azoles. The polypeptide is ABC multidrug transporter H (Aspergillus fumigatus (strain ATCC MYA-4609 / CBS 101355 / FGSC A1100 / Af293) (Neosartorya fumigata)).